Reading from the N-terminus, the 446-residue chain is Mannan endo-1,6-alpha-mannosidase DCW1 (446 aa).

Positions 1–18 (MRLVTLLSGLVSLVSVFG) are cleaved as a signal peptide. N-linked (GlcNAc...) asparagine glycosylation is found at Asn31, Asn81, Asn106, Asn200, Asn222, Asn237, Asn262, Asn278, Asn285, Asn334, Asn391, and Asn397. Positions 389–408 (PYNATNGGNSTGDGAAGTKP) are disordered. Ser422 is lipidated: GPI-anchor amidated serine. Residues 423-446 (RAGAGIITAIIGISIIACALWLVY) constitute a propeptide, removed in mature form.

The protein belongs to the glycosyl hydrolase 76 family.

The protein localises to the secreted. Its subcellular location is the cell wall. The protein resides in the cell membrane. The enzyme catalyses Random hydrolysis of (1-&gt;6)-alpha-D-mannosidic linkages in unbranched (1-&gt;6)-mannans.. Functionally, required for normal synthesis of the cell wall. The polypeptide is Mannan endo-1,6-alpha-mannosidase DCW1 (DCW1) (Candida glabrata (strain ATCC 2001 / BCRC 20586 / JCM 3761 / NBRC 0622 / NRRL Y-65 / CBS 138) (Yeast)).